The sequence spans 247 residues: 2,3-bisphosphoglycerate-dependent phosphoglycerate mutase (247 aa).

Substrate-binding positions include 8 to 15 (RHGESTWN), 21 to 22 (TG), R60, 87 to 90 (ERHY), K98, 114 to 115 (RR), and 183 to 184 (GN). The active-site Tele-phosphohistidine intermediate is H9. The Proton donor/acceptor role is filled by E87.

This sequence belongs to the phosphoglycerate mutase family. BPG-dependent PGAM subfamily. As to quaternary structure, homodimer.

It catalyses the reaction (2R)-2-phosphoglycerate = (2R)-3-phosphoglycerate. It participates in carbohydrate degradation; glycolysis; pyruvate from D-glyceraldehyde 3-phosphate: step 3/5. Its function is as follows. Catalyzes the interconversion of 2-phosphoglycerate and 3-phosphoglycerate. The protein is 2,3-bisphosphoglycerate-dependent phosphoglycerate mutase of Methylibium petroleiphilum (strain ATCC BAA-1232 / LMG 22953 / PM1).